The chain runs to 192 residues: Large ribosomal subunit protein bL25 (192 aa).

Belongs to the bacterial ribosomal protein bL25 family. CTC subfamily. As to quaternary structure, part of the 50S ribosomal subunit; part of the 5S rRNA/L5/L18/L25 subcomplex. Contacts the 5S rRNA. Binds to the 5S rRNA independently of L5 and L18.

Its function is as follows. This is one of the proteins that binds to the 5S RNA in the ribosome where it forms part of the central protuberance. The sequence is that of Large ribosomal subunit protein bL25 from Porphyromonas gingivalis (strain ATCC 33277 / DSM 20709 / CIP 103683 / JCM 12257 / NCTC 11834 / 2561).